The chain runs to 225 residues: Ras-related protein Rab-21 (225 aa).

Position 2 is an N-acetylalanine (A2). The GTP site is built by G28, G31, K32, T33, S34, N45, D46, H48, T50, and T51. Position 33 (T33) interacts with Mg(2+). Positions 43–56 (KFNDKHITTLQASF) match the Switch 1 motif. Mg(2+)-binding residues include T51 and D74. Residues 76 to 94 (AGQERFHALGPIYYRDSNG) carry the Switch 2 motif. GTP is bound by residues G77, N132, K133, D135, A163, and K164. Residues 188-225 (ERAKGNGSSQPGTARRGVQIIDDEPQAQTSGGGCCSSG) form a disordered region. 2 S-geranylgeranyl cysteine lipidation sites follow: C221 and C222. Cysteine methyl ester is present on C222. Positions 223-225 (SSG) are cleaved as a propeptide — removed in mature form.

The protein belongs to the small GTPase superfamily. Rab family. As to quaternary structure, interacts with the cytoplasmic tail of integrins ITGA1, ITGA2, ITGA5, ITGA6, ITGA11 and ITGB1. Interacts with RABGEF1 (via VPS9 domain). Interacts with ANKRD27. Interacts with VAMP7. Interacts (in GTP-bound form) with VAMP8 in response to starvation; the interaction probably regulates VAMP8 endolysosomal trafficking. Interacts (active GTP-bound form) with TMED10; the interaction is indirect and regulates TMED10 abundance and localization at the Golgi. Requires Mg(2+) as cofactor. In terms of tissue distribution, widely expressed. In jejunal tissue, predominantly expressed in the apical region of the epithelial cell layer of the villi, weak expression, if any, in the crypt epithelium. Capillary endothelium and some cell types in the lamina propria also show expression.

The protein resides in the endoplasmic reticulum membrane. It localises to the golgi apparatus. It is found in the trans-Golgi network. Its subcellular location is the golgi apparatus membrane. The protein localises to the early endosome membrane. The protein resides in the cytoplasmic vesicle membrane. It localises to the cleavage furrow. It is found in the cell projection. Its subcellular location is the neuron projection. It carries out the reaction GTP + H2O = GDP + phosphate + H(+). Regulated by guanine nucleotide exchange factors (GEFs) including ANKRD27 and RABGEF1, which promote the exchange of bound GDP for free GTP. Regulated by GTPase activating proteins (GAPs) which increase the GTP hydrolysis activity. Inhibited by GDP dissociation inhibitors (GDIs). The small GTPases Rab are key regulators of intracellular membrane trafficking, from the formation of transport vesicles to their fusion with membranes. Rabs cycle between an inactive GDP-bound form and an active GTP-bound form that is able to recruit to membranes different sets of downstream effectors directly responsible for vesicle formation, movement, tethering and fusion. RAB21 is involved in membrane trafficking control. During the mitosis of adherent cells, controls the endosomal trafficking of integrins which is required for the successful completion of cytokinesis. Regulates integrin internalization and recycling, but does not influence the traffic of endosomally translocated receptors in general. As a result, may regulate cell adhesion and migration. Involved in neurite growth. Following SBF2/MTMT13-mediated activation in response to starvation-induced autophagy, binds to and regulates SNARE protein VAMP8 endolysosomal transport required for SNARE-mediated autophagosome-lysosome fusion. Modulates protein levels of the cargo receptors TMED2 and TMED10, and required for appropriate Golgi localization of TMED10. The chain is Ras-related protein Rab-21 from Homo sapiens (Human).